The following is a 185-amino-acid chain: Elongation factor P (185 aa).

It belongs to the elongation factor P family.

The protein localises to the cytoplasm. Its pathway is protein biosynthesis; polypeptide chain elongation. Functionally, involved in peptide bond synthesis. Stimulates efficient translation and peptide-bond synthesis on native or reconstituted 70S ribosomes in vitro. Probably functions indirectly by altering the affinity of the ribosome for aminoacyl-tRNA, thus increasing their reactivity as acceptors for peptidyl transferase. This chain is Elongation factor P, found in Clostridioides difficile (strain 630) (Peptoclostridium difficile).